Here is a 999-residue protein sequence, read N- to C-terminus: Protein Smaug (999 aa).

The span at 1 to 36 shows a compositional bias: polar residues; sequence MKYATGTDNAMTSGISGQTNNSNSASNEMQPTTSTP. Disordered stretches follow at residues 1 to 69 and 329 to 349; these read MKYA…QSQP and LCPA…IAPP. Low complexity-rich tracts occupy residues 44–69 and 329–338; these read TSTA…QSQP and LCPASGSRSS. Phosphoserine is present on residues S564 and S575. An interaction with cup region spans residues 583–763; that stretch reads EFKPNYIKFH…KDLKFKLSKM (181 aa). The region spanning 600 to 654 is the SAM domain; that stretch reads GIGLWLKSLRLHKYIELFKNMTYEEMLLITEDFLQSVGVTKGASHKLALCIDKLK. Disordered regions lie at residues 773-892 and 955-977; these read HVKP…MQQM and QQSQ…EQQP. 2 stretches are compositionally biased toward polar residues: residues 801-822 and 854-864; these read KNGS…NFSL and HQPQYKSSSYP. S972 bears the Phosphoserine mark.

Belongs to the SMAUG family. In terms of assembly, interacts with oskar (osk). Binds to the 3'-UTR of nanos (nos). Interacts with cup, which in turn recruits eIF4-E, leading to an indirect interaction between smg and eIF4-E that prevents mRNA translation. Forms a complex with aub, twin, AGO3, nanos mRNA and piRNAs that targets the nanos 3'-untranslated region, in early embryos. In terms of tissue distribution, at syncytial blastoderm, it is located throughout the bulk cytoplasm and pole plasm. By the time of cellularization, it concentrates at the posterior pole.

It localises to the cytoplasm. Functionally, translation regulator that binds to the 3'-UTR of specific mRNAs such as nanos (nos) and prevents their translation. Prevents translation of unlocalized nanos in the bulk cytoplasm via the recruitment of cup. This chain is Protein Smaug (smg), found in Drosophila melanogaster (Fruit fly).